Consider the following 355-residue polypeptide: NADH-quinone oxidoreductase subunit H (355 aa).

Transmembrane regions (helical) follow at residues 25–45 (LVRILVVAVVILLCVAYLILW), 91–111 (WLYLVAPVMTVVPAFAVWAVI), 126–146 (LLYAMAISSIGVYAVILAGWA), 170–190 (MGFALVLVLMTAGSLNLSEIV), 205–225 (FLSWNWLPLLPAFVVYFVSGI), 253–273 (MAFALFFLAEYINMIVISALA), 290–310 (FIPGIFWLVLKVFALLSVFIW), and 330–350 (VFLPVTVIWVVVVGFWMMSPL).

This sequence belongs to the complex I subunit 1 family. In terms of assembly, NDH-1 is composed of 14 different subunits. Subunits NuoA, H, J, K, L, M, N constitute the membrane sector of the complex.

It is found in the cell inner membrane. The enzyme catalyses a quinone + NADH + 5 H(+)(in) = a quinol + NAD(+) + 4 H(+)(out). Functionally, NDH-1 shuttles electrons from NADH, via FMN and iron-sulfur (Fe-S) centers, to quinones in the respiratory chain. The immediate electron acceptor for the enzyme in this species is believed to be ubiquinone. Couples the redox reaction to proton translocation (for every two electrons transferred, four hydrogen ions are translocated across the cytoplasmic membrane), and thus conserves the redox energy in a proton gradient. This subunit may bind ubiquinone. This is NADH-quinone oxidoreductase subunit H from Burkholderia vietnamiensis (strain G4 / LMG 22486) (Burkholderia cepacia (strain R1808)).